The primary structure comprises 356 residues: 11-beta-hydroxysteroid dehydrogenase (356 aa).

A helical; Signal-anchor for type II membrane protein transmembrane segment spans residues Leu10–Phe30. The Proline-knob motif lies at Pro13–Ser26. Gly54 to Arg85 is an NADP(+) binding site. Ser184 is a binding site for substrate. Residue Tyr197 is the Proton acceptor of the active site. NADP(+)-binding positions include Tyr197–Lys201 and Lys201.

Belongs to the short-chain dehydrogenases/reductases (SDR) family. In terms of tissue distribution, expressed in megagametophytes (at protein level).

The protein localises to the lipid droplet. Its subcellular location is the membrane. The catalysed reaction is an 11beta-hydroxysteroid + NADP(+) = an 11-oxosteroid + NADPH + H(+). It catalyses the reaction corticosterone + NADP(+) = 11-dehydrocorticosterone + NADPH + H(+). The enzyme catalyses 17beta-estradiol + NADP(+) = estrone + NADPH + H(+). Has dehydrogenase activity against corticosterone (11 beta-hydroxysteroid) and estradiol (17 beta-hydroxysteroid) in the presence of NADP(+). May be involved in signal transduction regulated by various sterols. In Pinus massoniana (Chinese red pine), this protein is 11-beta-hydroxysteroid dehydrogenase.